The following is an 842-amino-acid chain: Glycogen phosphorylase, muscle form (842 aa).

S2 bears the N-acetylserine mark. S15 is subject to Phosphoserine; by PHK; in form phosphorylase A. Residues D43 and Y76 each coordinate AMP. Phosphotyrosine occurs at positions 204 and 227. R310 to C319 lines the AMP pocket. S430 is modified (phosphoserine). Position 473 is a phosphotyrosine (Y473). An N6-(pyridoxal phosphate)lysine modification is found at K681. S747 and S748 each carry phosphoserine.

Belongs to the glycogen phosphorylase family. Homodimer. Homotetramer; to form the enzymatically active phosphorylase A. Requires pyridoxal 5'-phosphate as cofactor. Post-translationally, phosphorylation of Ser-15 converts phosphorylase B (unphosphorylated) to phosphorylase A.

It carries out the reaction [(1-&gt;4)-alpha-D-glucosyl](n) + phosphate = [(1-&gt;4)-alpha-D-glucosyl](n-1) + alpha-D-glucose 1-phosphate. Its activity is regulated as follows. Allosterically regulated through the non-covalent binding of metabolites, being activated by AMP and inhibited by ATP, ADP, and glucose-6-phosphate. The activity is also controlled by post-translational modifications including phosphorylation. Its function is as follows. Allosteric enzyme that catalyzes the rate-limiting step in glycogen catabolism, the phosphorolytic cleavage of glycogen to produce glucose-1-phosphate, and plays a central role in maintaining cellular and organismal glucose homeostasis. This is Glycogen phosphorylase, muscle form from Ovis aries (Sheep).